We begin with the raw amino-acid sequence, 267 residues long: uncharacterized protein (267 aa).

The protein belongs to the lin-8 family.

This is an uncharacterized protein from Caenorhabditis elegans.